The chain runs to 630 residues: Long-chain-fatty-acid--AMP ligase FadD32 (630 aa).

ATP is bound by residues Thr-187–Arg-192, Ser-342, Ala-346, Asp-469, and Arg-483.

Belongs to the ATP-dependent AMP-binding enzyme family. As to quaternary structure, monomer.

The catalysed reaction is a long-chain fatty acid + holo-[ACP] + ATP = a long-chain fatty acyl-[ACP] + AMP + diphosphate. The enzyme catalyses decanoate + ATP + H(+) = decanoyl-AMP + diphosphate. It carries out the reaction dodecanoate + ATP + H(+) = dodecanoyl-AMP + diphosphate. It catalyses the reaction tetradecanoate + ATP + H(+) = tetradecanoyl-AMP + diphosphate. It participates in lipid metabolism; mycolic acid biosynthesis. The acyl-AMP ligase activity is inhibited by the alkylphosphate ester of AMP, adenosine 50-dodecylphosphate (AMPC12). Also inhibited by eicosyl-AMP (AMPC20). Its function is as follows. Involved in the biosynthesis of mycolic acids. Catalyzes the activation of long-chain fatty acids as acyl-adenylates (acyl-AMP), which are then transferred to the phosphopantetheine arm of the polyketide synthase Pks13 for further chain extension. Can use decanoate (C10), dodecanoate (C12) and tetradecanoate (C14). This Mycolicibacterium smegmatis (strain ATCC 700084 / mc(2)155) (Mycobacterium smegmatis) protein is Long-chain-fatty-acid--AMP ligase FadD32.